The following is a 416-amino-acid chain: Peptide chain release factor subunit 1 (416 aa).

It belongs to the eukaryotic release factor 1 family. As to quaternary structure, heterodimer of two subunits, one of which binds GTP.

It is found in the cytoplasm. In terms of biological role, directs the termination of nascent peptide synthesis (translation) in response to the termination codons UAA, UAG and UGA. The chain is Peptide chain release factor subunit 1 from Halorubrum lacusprofundi (strain ATCC 49239 / DSM 5036 / JCM 8891 / ACAM 34).